Here is a 226-residue protein sequence, read N- to C-terminus: Putative type II restriction enzyme MjaVIP (226 aa).

Belongs to the BsaWI type II restriction endonuclease family.

The catalysed reaction is Endonucleolytic cleavage of DNA to give specific double-stranded fragments with terminal 5'-phosphates.. Functionally, a P subtype restriction enzyme that recognizes the double-stranded sequence 5'-CCGG-3'; the cleavage site is unknown. This chain is Putative type II restriction enzyme MjaVIP (mjaVIRP), found in Methanocaldococcus jannaschii (strain ATCC 43067 / DSM 2661 / JAL-1 / JCM 10045 / NBRC 100440) (Methanococcus jannaschii).